Here is a 61-residue protein sequence, read N- to C-terminus: FTCFTTPSDTSETCPDGQNICYEKRWNSHQGVEIKGCVASCPEFESRFRYLLCCRIDNCNK.

Cystine bridges form between cysteine 3-cysteine 21, cysteine 14-cysteine 37, cysteine 41-cysteine 53, and cysteine 54-cysteine 59.

Belongs to the three-finger toxin family. Short-chain subfamily. Orphan group VI sub-subfamily. In terms of tissue distribution, expressed by the venom gland.

Its subcellular location is the secreted. The chain is Weak toxin CM-2 from Naja haje haje (Egyptian cobra).